Consider the following 700-residue polypeptide: MARKTPIERYRNIGISAHIDAGKTTTTERILFYTGVNHKIGEVHDGAATMDWMEQEQERGITITSAATTCFWKGMDMSYPEHRFNIIDTPGHVDFTIEVERSMRVLDGACMVYCAVGGVQPQSETVWRQANKYKVPRLAFVNKMDRTGANFFKVYDQMRLRLKANPVPVVIPIGAEEGFKGVVDLLKMKAIIWDEASQGMKFNYEEIPADLAESAKEWREKMVEAAAEASEELMNKYLEEGDLSEEEIKLGLRTRTIATEIQPMLCGTAFKNKGVQRMLDAVIDYLPSPVDIPPVAGTDEDEAETTRKADDNEKFSALAFKLMTDPFVGQLTFVRVYSGVLSKGDSVYNPVKGKKERIGRIVQMHANERLEVEEIRAGDIAACVGLKDVTTGETLCDPEAIVTLERMVFPEPVIAQAVEPKTKTDQEKMGIALQRLAAEDPSFRVKTDEESGQTIISGMGELHLEIIVDRMKREFGVEANVGKPQVAYRETIRKTVEEAEGKFVRQSGGKGQYGHVVLKIEPNEAGKGIEFVDAIKGGVVPREFIPAVEKGINEAVTQGVLAGYPVVDVKVTLHFGSYHDVDSNELAFKMAAIFGFKEGCKKAGPVILEPMMAVEVETPEDYAGTVMGDLSSRRGMVQGMDDMVGGGKAIKAEVPLSEMFGYSTALRSATQGRATYTMEFKHYSEAPRNVSEAIMAARAK.

The 283-residue stretch at 8 to 290 folds into the tr-type G domain; that stretch reads ERYRNIGISA…AVIDYLPSPV (283 aa). GTP contacts are provided by residues 17 to 24, 88 to 92, and 142 to 145; these read AHIDAGKT, DTPGH, and NKMD.

Belongs to the TRAFAC class translation factor GTPase superfamily. Classic translation factor GTPase family. EF-G/EF-2 subfamily.

The protein resides in the cytoplasm. Its function is as follows. Catalyzes the GTP-dependent ribosomal translocation step during translation elongation. During this step, the ribosome changes from the pre-translocational (PRE) to the post-translocational (POST) state as the newly formed A-site-bound peptidyl-tRNA and P-site-bound deacylated tRNA move to the P and E sites, respectively. Catalyzes the coordinated movement of the two tRNA molecules, the mRNA and conformational changes in the ribosome. This chain is Elongation factor G, found in Paracidovorax citrulli (strain AAC00-1) (Acidovorax citrulli).